We begin with the raw amino-acid sequence, 1364 residues long: Outer kinetochore KNL1 complex subunit spc7 (1364 aa).

Positions 1–15 (MPTSPRRNSIATTDN) are enriched in polar residues. Disordered regions lie at residues 1–36 (MPTS…GALQ), 124–190 (YPKD…DIAS), and 202–223 (EALN…LSIQ). Residues 124–136 (YPKDHQSDSEKST) show a composition bias toward basic and acidic residues. The span at 157 to 169 (GPTTTSFSRNETQ) shows a compositional bias: polar residues. A compositionally biased stretch (low complexity) spans 170 to 181 (SSPHSHSASIIS). The MELT; degenerate signature appears at 254-257 (MDLT). Thr257 is modified (phosphothreonine; by mph1). A disordered region spans residues 289-334 (ASHDPSNQTQLSSPNKSSSPTSIEISDFSKNNENHDQSENKEEEED). Residues 300 to 310 (SSPNKSSSPTS) show a composition bias toward low complexity. Residues 318-328 (KNNENHDQSEN) show a composition bias toward basic and acidic residues. Positions 450 to 453 (MDLT) match the MELT; degenerate motif. Thr453 carries the phosphothreonine; by mph1 modification. The tract at residues 456–503 (ISSTNAPTHLNEDDLNQFTSNISSSSKPRKDNNKTANSSKPIPDSEDF) is disordered. Residues 471 to 481 (NQFTSNISSSS) show a composition bias toward polar residues. The short motif at 504–507 (MDIT) is the MELT; degenerate element. Thr507 carries the post-translational modification Phosphothreonine; by mph1. 2 disordered regions span residues 564–643 (LPSA…SSFD) and 697–837 (GATP…GVSN). Positions 566-585 (SADKENAEREEIPSYSDKSE) are enriched in basic and acidic residues. A compositionally biased stretch (polar residues) spans 586–617 (NFNTTSFTNHERSPNGNNNLKFSKDPNSSSPS). Positions 719-730 (EVSRQPTDDKGE) are enriched in basic and acidic residues. A compositionally biased stretch (polar residues) spans 747-773 (LTIQQTNEIKHVPTNTTSSVKLPQQPS). Residues 791 to 802 (SLERLESQEPNR) show a composition bias toward basic and acidic residues. Residues 808 to 820 (VGSSNAGNTTSVG) are compositionally biased toward polar residues. Residues 1075 to 1155 (LAQAQEKLEK…EEQLLNLKNE (81 aa)) adopt a coiled-coil conformation. The Nuclear localization signal motif lies at 1091-1105 (RRRRLLSEKEERRKE).

In terms of assembly, component of the KNL1/SPC105 complex composed of at least spc7 and sos7. Part of the outer kinetochore KMN network that includes the KNL1, MIS12 and NDC80 complexes. Interacts (via C-terminus) with sos7 (via C-terminus); the interaction is direct. Interacts (when phosphorylated on MELT motifs) with bub1 and bub3; to recruit the BUB1-BUB3 complex to the kinetochore. Post-translationally, phosphorylation of threonine residues in the MELT motifs by mph1/mps1 leads to recruitment of bub1 and bub3 to the kinetochore, and is required to maintain spindle assembly checkpoint signaling.

It is found in the nucleus. Its subcellular location is the chromosome. The protein resides in the centromere. It localises to the kinetochore. Functionally, acts as a component of the outer kinetochore KNL1 complex that serves as a docking point for spindle assembly checkpoint components and mediates microtubule-kinetochore interactions. Kinetochores, consisting of a centromere-associated inner segment and a microtubule-contacting outer segment, play a crucial role in chromosome segregation by mediating the physical connection between centromeric DNA and spindle microtubules. The outer kinetochore is made up of the ten-subunit KMN network, comprising the MIS12, NDC80 and KNL1 complexes, and auxiliary microtubule-associated components; together they connect the outer kinetochore with the inner kinetochore, bind microtubules, and mediate interactions with mitotic checkpoint proteins that delay anaphase until chromosomes are bioriented on the spindle. Recruits the BUB1-BUB3 complex to kinetochores when phosphorylated by mph1/mps1, to support spindle assembly checkpoint signaling. Functions both in mitotic and in meiotic chromosome segregation. This chain is Outer kinetochore KNL1 complex subunit spc7, found in Schizosaccharomyces pombe (strain 972 / ATCC 24843) (Fission yeast).